The sequence spans 209 residues: Protein-L-isoaspartate O-methyltransferase (209 aa).

Residue Ser59 is part of the active site.

This sequence belongs to the methyltransferase superfamily. L-isoaspartyl/D-aspartyl protein methyltransferase family.

The protein resides in the cytoplasm. The enzyme catalyses [protein]-L-isoaspartate + S-adenosyl-L-methionine = [protein]-L-isoaspartate alpha-methyl ester + S-adenosyl-L-homocysteine. In terms of biological role, catalyzes the methyl esterification of L-isoaspartyl residues in peptides and proteins that result from spontaneous decomposition of normal L-aspartyl and L-asparaginyl residues. It plays a role in the repair and/or degradation of damaged proteins. The protein is Protein-L-isoaspartate O-methyltransferase of Helicobacter pylori (strain P12).